We begin with the raw amino-acid sequence, 92 residues long: Serine protease inhibitor I/II (92 aa).

A signal peptide spans 1-19 (MKLALALCAAFLLVVLVQA). Pacifastin domains follow at residues 20–54 (EQEC…CPPH) and 57–92 (EVTC…CPQK). Disulfide bonds link C23–C38, C33–C51, C36–C46, C60–C75, C70–C89, and C73–C84.

Belongs to the protease inhibitor I19 family. As to expression, expressed in hemolymph, ovaries, testes and fat body of adults but are absent in the gut. Also present in larval hemolymph and fat body.

The protein resides in the secreted. In terms of biological role, in vitro, is active against alpha-chymotrypsin and trypsin. Its function is as follows. In vitro, is active against alpha-chymotrypsin and pancreatic elastase. This is Serine protease inhibitor I/II from Schistocerca gregaria (Desert locust).